Reading from the N-terminus, the 258-residue chain is Triosephosphate isomerase (258 aa).

Substrate is bound at residue 11–13 (NWK). H101 serves as the catalytic Electrophile. The Proton acceptor role is filled by E173. Substrate contacts are provided by residues G179, S219, and 240–241 (GG).

The protein belongs to the triosephosphate isomerase family. Homodimer.

The protein localises to the cytoplasm. The enzyme catalyses D-glyceraldehyde 3-phosphate = dihydroxyacetone phosphate. The protein operates within carbohydrate biosynthesis; gluconeogenesis. It participates in carbohydrate degradation; glycolysis; D-glyceraldehyde 3-phosphate from glycerone phosphate: step 1/1. In terms of biological role, involved in the gluconeogenesis. Catalyzes stereospecifically the conversion of dihydroxyacetone phosphate (DHAP) to D-glyceraldehyde-3-phosphate (G3P). The protein is Triosephosphate isomerase of Streptomyces coelicolor (strain ATCC BAA-471 / A3(2) / M145).